The sequence spans 70 residues: Turripeptide Gsg9.2 (70 aa).

The signal sequence occupies residues 1–20 (MKVYCLLLVLLVGLVSQAHG). The region spanning 21-70 (QLDKKCQMVCTMDYRPVCGSDGRTYPNKCTLTSTACMSQRSITVFHDGEC) is the Kazal-like domain. Disulfide bonds link Cys26-Cys56, Cys30-Cys49, and Cys38-Cys70.

It belongs to the conopeptide P-like superfamily. In terms of tissue distribution, expressed by the venom duct.

Its subcellular location is the secreted. Functionally, acts as a neurotoxin by inhibiting an ion channel. May also act as a serine protease inhibitor, since it possess the kazal serine protease inhibitor signature. The chain is Turripeptide Gsg9.2 from Gemmula sogodensis (Gem-turris).